The primary structure comprises 284 residues: Short-chain dehydrogenase RED1 (284 aa).

Residues Ile11, Thr37, Asp58, Asn86, Tyr151, Lys155, Val184, and Thr186 each contribute to the NADP(+) site. Tyr151 serves as the catalytic Proton acceptor. Lys155 functions as the Lowers pKa of active site Tyr in the catalytic mechanism.

It belongs to the short-chain dehydrogenases/reductases (SDR) family.

It participates in polyketide biosynthesis. Its function is as follows. Short-chain dehydrogenase; part of the gene cluster that mediates the biosynthesis of pyriculol and pyriculariol, two heptaketides that induce lesion formation upon application on rice leaves but are dispensable for pathogenicity. The highly reducing polyketide synthase synthesizes the heptaketide backbone of pyriculol and pyriculariol. Pyriculol and pyriculariol contain several hydroxyl moieties and double bonds, so it can be assumed that several reduction steps occur during biosynthesis. These reactions could be executed by PKS19 itself or partly by the tailoring enzymes OXR1, OXR2, RED1, RED2 or RED3, identified within the cluster. The FAD-linked oxidoreductase OXR1 is the only tailoring enzyme for which the function has been determined yet, and is involved in the oxidation of dihydropyriculol and dihydropyriculariol into pyriculol and pyriculariol, respectively. This Pyricularia oryzae (strain 70-15 / ATCC MYA-4617 / FGSC 8958) (Rice blast fungus) protein is Short-chain dehydrogenase RED1.